The following is a 478-amino-acid chain: Zinc metalloproteinase/disintegrin (478 aa).

A signal peptide spans 1-20 (MIQVLLVTICLAAFPYQGSS). Residues 21 to 188 (IILESGNVND…PIKKVSQLNL (168 aa)) constitute a propeptide that is removed on maturation. The region spanning 194–391 (RHVDIVVVVD…QNPQCILNKP (198 aa)) is the Peptidase M12B domain. Residues Cys207 and Cys248 are joined by a disulfide bond. The N-linked (GlcNAc...) (complex) asparagine glycan is linked to Asn279. Cystine bridges form between Cys305-Cys386, Cys345-Cys370, and Cys347-Cys353. His330 contacts Zn(2+). Residue Glu331 is part of the active site. Zn(2+) is bound by residues His334 and His340. Residue Asn369 is glycosylated (N-linked (GlcNAc...) (complex) asparagine). Positions 392 to 407 (LRTVSIPVSGNEHLEA) are excised as a propeptide. The Disintegrin domain occupies 397–478 (IPVSGNEHLE…ADCPRYHSHA (82 aa)). 6 disulfide bridges follow: Cys411–Cys426, Cys413–Cys421, Cys420–Cys443, Cys434–Cys440, Cys439–Cys464, and Cys452–Cys471. Positions 456–458 (RGD) match the Cell attachment site motif. A propeptide spanning residues 476-478 (SHA) is cleaved from the precursor.

It belongs to the venom metalloproteinase (M12B) family. P-II subfamily. P-IIa sub-subfamily. In terms of assembly, monomeric (disintegrin). Zn(2+) is required as a cofactor. In terms of processing, glycans are composed of 4 GlcNAc, 3 Man, 2 Gal, 2 NeuAC and 1 Fuc residue. As to expression, expressed by the venom gland.

Its subcellular location is the secreted. Its function is as follows. Impairs hemostasis in the envenomed animal. In terms of biological role, inhibits platelet aggregation induced by ADP, thrombin, platelet-activating factor and collagen. Acts by inhibiting fibrinogen interaction with platelet receptors alpha-IIb/beta-3 (ITGA2B/ITGB3). This chain is Zinc metalloproteinase/disintegrin, found in Calloselasma rhodostoma (Malayan pit viper).